A 252-amino-acid polypeptide reads, in one-letter code: Putative peptide zinc metalloprotease protein YydH (252 aa).

The next 2 helical transmembrane spans lie at 56–76 and 85–105; these read FFYL…IHLI and VFYG…NIVL. H106 is a binding site for Zn(2+). The active site involves E107. Position 110 (H110) interacts with Zn(2+). 3 helical membrane passes run 152 to 172, 181 to 201, and 231 to 251; these read IIVH…LELI, ALTM…IPIL, and IQII…LYIV.

Belongs to the peptidase M50B family. It depends on Zn(2+) as a cofactor.

It localises to the cell membrane. Its function is as follows. Required for production of the modified peptide YydF. May process the precursor form of YydF to release the active peptide (Potential). In Bacillus subtilis (strain 168), this protein is Putative peptide zinc metalloprotease protein YydH (yydH).